A 122-amino-acid chain; its full sequence is Large ribosomal subunit protein uL14 (122 aa).

The protein belongs to the universal ribosomal protein uL14 family. As to quaternary structure, part of the 50S ribosomal subunit. Forms a cluster with proteins L3 and L19. In the 70S ribosome, L14 and L19 interact and together make contacts with the 16S rRNA in bridges B5 and B8.

Functionally, binds to 23S rRNA. Forms part of two intersubunit bridges in the 70S ribosome. This is Large ribosomal subunit protein uL14 from Rickettsia typhi (strain ATCC VR-144 / Wilmington).